Here is a 297-residue protein sequence, read N- to C-terminus: Nucleotide-binding protein Bphyt_0592 (297 aa).

An ATP-binding site is contributed by 8-15 (GISGSGKS). 57–60 (DARS) lines the GTP pocket.

The protein belongs to the RapZ-like family.

Its function is as follows. Displays ATPase and GTPase activities. This Paraburkholderia phytofirmans (strain DSM 17436 / LMG 22146 / PsJN) (Burkholderia phytofirmans) protein is Nucleotide-binding protein Bphyt_0592.